Reading from the N-terminus, the 66-residue chain is Large ribosomal subunit protein uL29 (66 aa).

Belongs to the universal ribosomal protein uL29 family.

The protein is Large ribosomal subunit protein uL29 of Kosmotoga olearia (strain ATCC BAA-1733 / DSM 21960 / TBF 19.5.1).